The sequence spans 157 residues: Peroxiredoxin Bcp (157 aa).

A Thioredoxin domain is found at 3–156; that stretch reads IEIGQKAPDL…ALQTLKDMSE (154 aa). C45 (cysteine sulfenic acid (-SOH) intermediate) is an active-site residue. Cysteines 45 and 50 form a disulfide.

This sequence belongs to the peroxiredoxin family. BCP/PrxQ subfamily. Monomer.

The catalysed reaction is a hydroperoxide + [thioredoxin]-dithiol = an alcohol + [thioredoxin]-disulfide + H2O. In terms of biological role, thiol-specific peroxidase that catalyzes the reduction of hydrogen peroxide and organic hydroperoxides to water and alcohols, respectively. Plays a role in cell protection against oxidative stress by detoxifying peroxides and as sensor of hydrogen peroxide-mediated signaling events. This Bacillus subtilis (strain 168) protein is Peroxiredoxin Bcp (ygaF).